A 158-amino-acid chain; its full sequence is Transcription factor BTF3 homolog 4 (158 aa).

Positions T33 to L98 constitute an NAC-A/B domain. Positions Q123–N158 are disordered. Acidic residues predominate over residues D134–P143.

The protein belongs to the NAC-beta family.

The sequence is that of Transcription factor BTF3 homolog 4 (btf3l4) from Xenopus laevis (African clawed frog).